Here is a 336-residue protein sequence, read N- to C-terminus: 4-hydroxythreonine-4-phosphate dehydrogenase (336 aa).

The substrate site is built by His-135 and Thr-136. His-165, His-210, and His-265 together coordinate a divalent metal cation. Residues Lys-273, Asn-282, and Arg-291 each contribute to the substrate site.

Belongs to the PdxA family. Homodimer. Zn(2+) serves as cofactor. It depends on Mg(2+) as a cofactor. Co(2+) is required as a cofactor.

The protein resides in the cytoplasm. It carries out the reaction 4-(phosphooxy)-L-threonine + NAD(+) = 3-amino-2-oxopropyl phosphate + CO2 + NADH. It functions in the pathway cofactor biosynthesis; pyridoxine 5'-phosphate biosynthesis; pyridoxine 5'-phosphate from D-erythrose 4-phosphate: step 4/5. In terms of biological role, catalyzes the NAD(P)-dependent oxidation of 4-(phosphooxy)-L-threonine (HTP) into 2-amino-3-oxo-4-(phosphooxy)butyric acid which spontaneously decarboxylates to form 3-amino-2-oxopropyl phosphate (AHAP). This is 4-hydroxythreonine-4-phosphate dehydrogenase from Marinobacter nauticus (strain ATCC 700491 / DSM 11845 / VT8) (Marinobacter aquaeolei).